The chain runs to 305 residues: 3-methyl-2-oxobutanoate hydroxymethyltransferase (305 aa).

The Mg(2+) site is built by aspartate 52 and aspartate 95. 3-methyl-2-oxobutanoate is bound by residues 52-53 (DS), aspartate 95, and lysine 125. Glutamate 127 provides a ligand contact to Mg(2+). Glutamate 194 (proton acceptor) is an active-site residue.

Belongs to the PanB family. As to quaternary structure, homodecamer; pentamer of dimers. It depends on Mg(2+) as a cofactor.

The protein resides in the cytoplasm. It carries out the reaction 3-methyl-2-oxobutanoate + (6R)-5,10-methylene-5,6,7,8-tetrahydrofolate + H2O = 2-dehydropantoate + (6S)-5,6,7,8-tetrahydrofolate. It participates in cofactor biosynthesis; (R)-pantothenate biosynthesis; (R)-pantoate from 3-methyl-2-oxobutanoate: step 1/2. Functionally, catalyzes the reversible reaction in which hydroxymethyl group from 5,10-methylenetetrahydrofolate is transferred onto alpha-ketoisovalerate to form ketopantoate. The sequence is that of 3-methyl-2-oxobutanoate hydroxymethyltransferase from Anaeromyxobacter sp. (strain Fw109-5).